The primary structure comprises 86 residues: Kunitz-type anticoagulant protein Ir-CPI (86 aa).

Residues 1-19 (MPFIFVVSFAILACIVVDT) form the signal peptide. Positions 31 to 81 (CKLPPDDGPCRARIPSYYFDRKTKTCKEFMYGGCEGNENNFENITTCQEEC) constitute a BPTI/Kunitz inhibitor domain. Intrachain disulfides connect Cys-31–Cys-81, Cys-40–Cys-64, and Cys-56–Cys-77. An N-linked (GlcNAc...) asparagine glycan is attached at Asn-73.

Salivary gland.

The protein resides in the secreted. Anticoagulant protein. Increases fibrinolysis time. Inhibits thrombin generation. Inhibits the generation of the active forms of host coagulation factor XII, factor XI and plasma kallikrein. This is Kunitz-type anticoagulant protein Ir-CPI from Ixodes ricinus (Common tick).